The following is a 439-amino-acid chain: Proline--tRNA ligase (439 aa).

This sequence belongs to the class-II aminoacyl-tRNA synthetase family. ProS type 2 subfamily. Homodimer.

It is found in the cytoplasm. The catalysed reaction is tRNA(Pro) + L-proline + ATP = L-prolyl-tRNA(Pro) + AMP + diphosphate. Functionally, catalyzes the attachment of proline to tRNA(Pro) in a two-step reaction: proline is first activated by ATP to form Pro-AMP and then transferred to the acceptor end of tRNA(Pro). This Rhodopseudomonas palustris (strain HaA2) protein is Proline--tRNA ligase.